A 349-amino-acid chain; its full sequence is Probable trehalose-phosphate phosphatase H (349 aa).

The protein belongs to the trehalose phosphatase family. It depends on a divalent metal cation as a cofactor.

The catalysed reaction is alpha,alpha-trehalose 6-phosphate + H2O = alpha,alpha-trehalose + phosphate. The protein operates within glycan biosynthesis; trehalose biosynthesis. Removes the phosphate from trehalose 6-phosphate to produce free trehalose. Trehalose accumulation in plant may improve abiotic stress tolerance. This chain is Probable trehalose-phosphate phosphatase H (TPPH), found in Arabidopsis thaliana (Mouse-ear cress).